The chain runs to 379 residues: Guanine nucleotide-binding protein G(s) subunit alpha (379 aa).

In terms of domain architecture, G-alpha spans 38–379; it reads STHRLLLLGA…RMHLRQYELL (342 aa). The G1 motif stretch occupies residues 41 to 54; that stretch reads RLLLLGAGESGKST. GTP-binding positions include 46-53, 182-188, 207-211, 276-279, and Ala351; these read GAGESGKS, LRCRVLT, DVGGQ, and NKQD. Residues Ser53 and Thr188 each coordinate Mg(2+). Positions 180 to 188 are G2 motif; the sequence is DILRCRVLT. The G3 motif stretch occupies residues 203–212; the sequence is FHMFDVGGQR. Positions 272 to 279 are G4 motif; the sequence is ILFLNKQD. The G5 motif stretch occupies residues 349-354; that stretch reads TCAVDT.

This sequence belongs to the G-alpha family. G(s) subfamily. G proteins are composed of 3 units; alpha, beta and gamma. The alpha chain contains the guanine nucleotide binding site.

Functionally, guanine nucleotide-binding proteins (G proteins) are involved as modulators or transducers in various transmembrane signaling systems. The G(s) protein is involved in hormonal regulation of adenylate cyclase: it activates the cyclase in response to beta-adrenergic stimuli. This is Guanine nucleotide-binding protein G(s) subunit alpha from Schistosoma mansoni (Blood fluke).